A 248-amino-acid polypeptide reads, in one-letter code: Ras-related protein Rab-28 (248 aa).

The tract at residues 1–30 is disordered; it reads MTTMGEDEAPALPKKSPLPEKIDEADVDDD. 42–50 serves as a coordination point for GTP; sequence GDGASGKTS. The Effector region motif lies at 64–72; the sequence is YHQTLGLDF. GTP-binding positions include 91–95, 152–155, and 182–184; these read DIGGQ, NKTD, and SAK. Residues 227-248 are disordered; that stretch reads QSDASYARRSDQSRSTSVCSIT. The span at 239-248 shows a compositional bias: polar residues; the sequence is SRSTSVCSIT.

It belongs to the small GTPase superfamily. Rab family. In terms of tissue distribution, expressed in amphid and phasmid ciliated sensory neurons.

It is found in the cell projection. It localises to the cilium membrane. Its subcellular location is the perikaryon. The protein localises to the cytoplasm. The protein resides in the cytoskeleton. It is found in the cilium axoneme. In terms of biological role, GTPase. Intraflagellar transport (IFT) cargo that undergoes bidirectional IFT along the ciliary axoneme when in active GTP-bound state in amphid and phasmid ciliated sensory neurons. Targeting and function as IFT cargo may depend on the BBSome, an IFT cargo adapter. Does not undergo IFT when in inactive GDP-bound state. May in turn play a role in cilium structure and/or function in ciliated sensory neurons. The sequence is that of Ras-related protein Rab-28 from Caenorhabditis elegans.